The following is a 673-amino-acid chain: Clotting factor G alpha subunit (673 aa).

Positions 1-19 (MLVLLCCVVLHVGVARICC) are cleaved as a signal peptide. The 231-residue stretch at 27–257 (LVWSDEFTNG…YVRVYQDAST (231 aa)) folds into the GH16 domain. The active-site Nucleophile is the E137. E142 (proton donor) is an active-site residue. A glycan (N-linked (GlcNAc...) asparagine) is linked at N186. The Ricin B-type lectin domain maps to 266–404 (LDGYYFVQNR…NQLSGQWKLI (139 aa)). 2 consecutive CBM6 domains span residues 411–533 (KLIQ…IKIT) and 549–671 (KLIQ…IRIT).

Belongs to the glycosyl hydrolase 16 family. In terms of assembly, clotting factor G is a heterodimer composed of two non-covalently associated subunits, alpha and beta. Post-translationally, in presence of (1-&gt;3)-beta-glucan, proteolytically cleaved into a 55kDa and a 17kDa forms. As to expression, expressed in hemocytes (at protein level).

Its function is as follows. Component of the heterodimer clotting factor G which may play a role in defense mechanisms against fungi. Initiates a (1-&gt;3)-beta-glucan-sensing clotting pathway whereby the alpha subunit binds to glucans containing (1-&gt;3)-beta linkages, which are components of the fungal cell wall, and the beta subunit catalyzes the activation of proclotting enzyme. This chain is Clotting factor G alpha subunit, found in Tachypleus tridentatus (Japanese horseshoe crab).